A 320-amino-acid polypeptide reads, in one-letter code: Heterogeneous nuclear ribonucleoprotein A1 (320 aa).

At methionine 1 the chain carries N-acetylmethionine. Serine 2 carries the post-translational modification N-acetylserine; in Heterogeneous nuclear ribonucleoprotein A1, N-terminally processed. Serine 2 bears the Phosphoserine mark. Position 3 is an N6-acetyllysine; alternate (lysine 3). Lysine 3 participates in a covalent cross-link: Glycyl lysine isopeptide (Lys-Gly) (interchain with G-Cter in SUMO2); alternate. 2 positions are modified to phosphoserine: serine 4 and serine 6. A globular A domain region spans residues 4–94; sequence SESPKEPEQL…EPKRAVSRED (91 aa). Lysine 8 is covalently cross-linked (Glycyl lysine isopeptide (Lys-Gly) (interchain with G-Cter in SUMO2)). 2 RRM domains span residues 14–97 and 105–184; these read RKLF…DSQR and KKIF…LCKQ. The residue at position 22 (serine 22) is a Phosphoserine. Lysine 78 is covalently cross-linked (Glycyl lysine isopeptide (Lys-Gly) (interchain with G-Cter in SUMO2)). The interval 95-185 is globular B domain; it reads SQRPGAHLTV…EVRKALCKQE (91 aa). Residue lysine 113 forms a Glycyl lysine isopeptide (Lys-Gly) (interchain with G-Cter in SUMO) linkage. Residues lysine 179 and lysine 183 each participate in a glycyl lysine isopeptide (Lys-Gly) (interchain with G-Cter in SUMO2) cross-link. Residues 188 to 216 are disordered; it reads SASSSQRGRSGSGNFGGGRGGGFGGNDNF. Residue serine 192 is modified to Phosphoserine; by MKNK2. Arginine 194 bears the Asymmetric dimethylarginine; alternate mark. A Dimethylated arginine; alternate modification is found at arginine 194. An Omega-N-methylarginine; alternate modification is found at arginine 194. The segment covering 197–216 has biased composition (gly residues); sequence SGSGNFGGGRGGGFGGNDNF. Serine 199 is modified (phosphoserine). 4 positions are modified to asymmetric dimethylarginine; alternate: arginine 206, arginine 218, arginine 225, and arginine 232. At arginine 206 the chain carries Dimethylated arginine; alternate. Omega-N-methylarginine; alternate is present on residues arginine 206, arginine 218, arginine 225, and arginine 232. The tract at residues 218–240 is RNA-binding RGG-box; sequence RGGNFSGRGGFGGSRGGGGYGGS. Arginine 225 is subject to Dimethylated arginine; alternate. Residues 268 to 305 are nuclear targeting sequence; that stretch reads NQSSNFGPMKGGNFGGRSSGPYGGGGQYFAKPRNQGGY. Residues 271-320 are disordered; it reads SNFGPMKGGNFGGRSSGPYGGGGQYFAKPRNQGGYGGSSSSSSYGSGRRF. Residues 276–294 are compositionally biased toward gly residues; it reads MKGGNFGGRSSGPYGGGGQ. An Omega-N-methylarginine modification is found at arginine 284. Serine 285 is modified (phosphoserine). The residue at position 298 (lysine 298) is an N6-acetyllysine; alternate. Residue lysine 298 forms a Glycyl lysine isopeptide (Lys-Gly) (interchain with G-Cter in SUMO2); alternate linkage. Arginine 300 carries the omega-N-methylarginine modification. The segment covering 308–320 has biased composition (low complexity); that stretch reads SSSSSSYGSGRRF. Serine 309 carries the phosphoserine modification. Phosphoserine; by MKNK2 occurs at positions 310, 311, and 312. A phosphoserine mark is found at serine 313 and serine 316. Position 318 is an omega-N-methylarginine (arginine 318).

Identified in the spliceosome C complex. Identified in a IGF2BP1-dependent mRNP granule complex containing untranslated mRNAs. Interacts with SEPT6. Interacts with C9orf72. Interacts with KHDRBS1. Interacts with UBQLN2. Interacts with PPIA/CYPA. In terms of processing, sumoylated.

The protein resides in the nucleus. The protein localises to the cytoplasm. In terms of biological role, involved in the packaging of pre-mRNA into hnRNP particles, transport of poly(A) mRNA from the nucleus to the cytoplasm and modulation of splice site selection. Plays a role in the splicing of pyruvate kinase PKM by binding repressively to sequences flanking PKM exon 9, inhibiting exon 9 inclusion and resulting in exon 10 inclusion and production of the PKM M2 isoform. Binds to the IRES and thereby inhibits the translation of the apoptosis protease activating factor APAF1. May bind to specific miRNA hairpins. The chain is Heterogeneous nuclear ribonucleoprotein A1 (Hnrnpa1) from Rattus norvegicus (Rat).